The following is a 269-amino-acid chain: Undecaprenyl-diphosphatase (269 aa).

A run of 8 helical transmembrane segments spans residues 1 to 21 (MSIF…FLPI), 39 to 59 (LPIL…CTVF), 86 to 106 (LMMI…GLLL), 112 to 132 (TIDI…LIAS), 144 to 164 (VTLL…IPGI), 184 to 204 (AGEF…ILEI), 210 to 230 (LLAG…FVVG), and 249 to 269 (FAFY…GFAG).

This sequence belongs to the UppP family.

The protein resides in the cell inner membrane. It carries out the reaction di-trans,octa-cis-undecaprenyl diphosphate + H2O = di-trans,octa-cis-undecaprenyl phosphate + phosphate + H(+). Catalyzes the dephosphorylation of undecaprenyl diphosphate (UPP). Confers resistance to bacitracin. The protein is Undecaprenyl-diphosphatase of Treponema denticola (strain ATCC 35405 / DSM 14222 / CIP 103919 / JCM 8153 / KCTC 15104).